The following is a 167-amino-acid chain: Shikimate kinase (167 aa).

12 to 17 (GSGKTT) is an ATP binding site. Threonine 16 serves as a coordination point for Mg(2+). Residues aspartate 34, arginine 58, and glycine 80 each contribute to the substrate site. ATP is bound at residue arginine 117. Residue arginine 135 coordinates substrate. Arginine 152 is a binding site for ATP.

This sequence belongs to the shikimate kinase family. Monomer. Mg(2+) serves as cofactor.

It localises to the cytoplasm. It catalyses the reaction shikimate + ATP = 3-phosphoshikimate + ADP + H(+). It functions in the pathway metabolic intermediate biosynthesis; chorismate biosynthesis; chorismate from D-erythrose 4-phosphate and phosphoenolpyruvate: step 5/7. Catalyzes the specific phosphorylation of the 3-hydroxyl group of shikimic acid using ATP as a cosubstrate. The chain is Shikimate kinase from Salinispora arenicola (strain CNS-205).